A 50-amino-acid chain; its full sequence is Protease inhibitor 2 (50 aa).

The 49-residue stretch at 2–50 folds into the Kazal-like domain; that stretch reads EDCVGRKACTREWYPVCGSDGVTYSNPCNFSAQQEQCDPNITIAHMGEC. 2 disulfides stabilise this stretch: Cys10–Cys29 and Cys18–Cys50. N-linked (GlcNAc...) asparagine glycosylation is found at Asn30 and Asn41.

Its function is as follows. Serine protease inhibitor. Strongly inhibits human neutrophil elastase and trypsin, also inhibits porcine pancreatic elastase and subtilisin A. Does not inhibit chymotrypsin, plasma kallikrein, pancreatic kallikrein, thrombin or papain. In Cenchritis muricatus (Beaded periwinkle), this protein is Protease inhibitor 2.